A 188-amino-acid chain; its full sequence is Phosphoribosylglycinamide formyltransferase (188 aa).

A N(1)-(5-phospho-beta-D-ribosyl)glycinamide-binding site is contributed by 12-14 (GSN). Residues Lys66, 91–94 (MRLI), and Asn108 contribute to the (6R)-10-formyltetrahydrofolate site. His110 (proton donor) is an active-site residue.

Belongs to the GART family.

It carries out the reaction N(1)-(5-phospho-beta-D-ribosyl)glycinamide + (6R)-10-formyltetrahydrofolate = N(2)-formyl-N(1)-(5-phospho-beta-D-ribosyl)glycinamide + (6S)-5,6,7,8-tetrahydrofolate + H(+). It functions in the pathway purine metabolism; IMP biosynthesis via de novo pathway; N(2)-formyl-N(1)-(5-phospho-D-ribosyl)glycinamide from N(1)-(5-phospho-D-ribosyl)glycinamide (10-formyl THF route): step 1/1. In terms of biological role, catalyzes the transfer of a formyl group from 10-formyltetrahydrofolate to 5-phospho-ribosyl-glycinamide (GAR), producing 5-phospho-ribosyl-N-formylglycinamide (FGAR) and tetrahydrofolate. This chain is Phosphoribosylglycinamide formyltransferase, found in Staphylococcus aureus (strain Mu50 / ATCC 700699).